The following is a 105-amino-acid chain: Large ribosomal subunit protein uL24 (105 aa).

This sequence belongs to the universal ribosomal protein uL24 family. In terms of assembly, part of the 50S ribosomal subunit.

Its function is as follows. One of two assembly initiator proteins, it binds directly to the 5'-end of the 23S rRNA, where it nucleates assembly of the 50S subunit. One of the proteins that surrounds the polypeptide exit tunnel on the outside of the subunit. In Aeromonas salmonicida (strain A449), this protein is Large ribosomal subunit protein uL24.